Consider the following 350-residue polypeptide: Phospho-2-dehydro-3-deoxyheptonate aldolase, Phe-sensitive (350 aa).

Residue Lys244 is modified to N6-acetyllysine.

This sequence belongs to the class-I DAHP synthase family. As to quaternary structure, homotetramer.

The catalysed reaction is D-erythrose 4-phosphate + phosphoenolpyruvate + H2O = 7-phospho-2-dehydro-3-deoxy-D-arabino-heptonate + phosphate. It participates in metabolic intermediate biosynthesis; chorismate biosynthesis; chorismate from D-erythrose 4-phosphate and phosphoenolpyruvate: step 1/7. Stereospecific condensation of phosphoenolpyruvate (PEP) and D-erythrose-4-phosphate (E4P) giving rise to 3-deoxy-D-arabino-heptulosonate-7-phosphate (DAHP). This Escherichia coli O157:H7 protein is Phospho-2-dehydro-3-deoxyheptonate aldolase, Phe-sensitive (aroG).